The following is a 590-amino-acid chain: EGF-like and EMI domain-containing protein 1 (590 aa).

A signal peptide spans 1-23; it reads MTSPLCFWCFCVWAAANWPPGSA. Residues 44-104 form the EMI domain; that stretch reads LSRPCAQAFI…RCCPGWIQWD (61 aa). Residues 105–145 form the EGF-like 1 domain; the sequence is DEPGCFSSLSSLGTHFSGRECSYQDTRQCLCSQGFHGPHCQ. 11 disulfides stabilise this stretch: cysteine 109–cysteine 125, cysteine 135–cysteine 144, cysteine 168–cysteine 179, cysteine 175–cysteine 188, cysteine 190–cysteine 203, cysteine 209–cysteine 219, cysteine 215–cysteine 228, cysteine 230–cysteine 243, cysteine 249–cysteine 260, cysteine 256–cysteine 269, and cysteine 271–cysteine 284. In terms of domain architecture, EGF-like 2; calcium-binding spans 164-204; it reads NVDECAVVNGGCQQRCINTLGTFHCECDTGYRRHADERTCI. The region spanning 205–244 is the EGF-like 3 domain; the sequence is KTDPCAGANGCAHLCQTENGMARCACHAGYQLSEDKKACE. The EGF-like 4; calcium-binding domain occupies 245–285; that stretch reads DINECAGELAPCAHHCVNSKGSFTCTCHPGFELGADRKHCY. The disordered stretch occupies residues 393–424; the sequence is RLAQNPPQPFPYLDPSLTASYEDEDNDDADSE. The span at 413–424 shows a compositional bias: acidic residues; it reads YEDEDNDDADSE. Residues 445–481 enclose the EGF-like 5 domain; sequence FGLDCSLSCEDCMNGGRCQEGKSGCLCPAEWTGLICN. Intrachain disulfides connect cysteine 449–cysteine 462, cysteine 456–cysteine 469, and cysteine 471–cysteine 480.

This Mus musculus (Mouse) protein is EGF-like and EMI domain-containing protein 1 (Egfem1).